The following is a 628-amino-acid chain: Eukaryotic peptide chain release factor GTP-binding subunit ERF3B (628 aa).

A compositionally biased stretch (low complexity) spans 1 to 10; that stretch reads MDSGSSSSDS. Disordered stretches follow at residues 1–49, 72–124, and 146–195; these read MDSG…SAFS, FLRG…LEGS, and LEES…VIVP. Residues 201-425 form the tr-type G domain; that stretch reads KEHVNVVFIG…YLDNLPNFNR (225 aa). The interval 210 to 217 is G1; the sequence is GHVDAGKS. 213-218 lines the GTP pocket; sequence DAGKST. The G2 stretch occupies residues 266–270; the sequence is GKTVE. The segment at 287–290 is G3; the sequence is DAPG. GTP contacts are provided by residues 349-352 and 391-393; these read NKMD and SGL. The interval 349-352 is G4; the sequence is NKMD. Positions 391–393 are G5; the sequence is SGL.

Belongs to the TRAFAC class translation factor GTPase superfamily. Classic translation factor GTPase family. ERF3 subfamily. Component of the eRF1-eRF3-GTP ternary complex, composed of ETF1/ERF1 and ERF3 (GSPT1/ERF3A or GSPT2/ERF3B) and GTP. Component of the transient SURF (SMG1-UPF1-eRF1-eRF3) complex. Interacts with UPF1 and PABPC1. In terms of tissue distribution, highly expressed in IUCC stage II colorectal cancer (CRC).

It localises to the cytoplasm. The catalysed reaction is GTP + H2O = GDP + phosphate + H(+). Functionally, GTPase component of the eRF1-eRF3-GTP ternary complex, a ternary complex that mediates translation termination in response to the termination codons UAA, UAG and UGA. GSPT2/ERF3B mediates ETF1/ERF1 delivery to stop codons: The eRF1-eRF3-GTP complex binds to a stop codon in the ribosomal A-site. GTP hydrolysis by GSPT2/ERF3B induces a conformational change that leads to its dissociation, permitting ETF1/ERF1 to accommodate fully in the A-site. Component of the transient SURF complex which recruits UPF1 to stalled ribosomes in the context of nonsense-mediated decay (NMD) of mRNAs containing premature stop codons. The sequence is that of Eukaryotic peptide chain release factor GTP-binding subunit ERF3B (GSPT2) from Homo sapiens (Human).